The chain runs to 107 residues: U1-lycotoxin-Ls1b (107 aa).

Positions 1-20 (MMKVLVVVALLPTLISYSSS) are cleaved as a signal peptide. Residues 21–41 (EGIDDLEADELLSLMANEQTR) constitute a propeptide that is removed on maturation. Cystine bridges form between cysteine 44/cysteine 59, cysteine 51/cysteine 68, cysteine 58/cysteine 86, and cysteine 70/cysteine 84.

This sequence belongs to the neurotoxin 19 (CSTX) family. 04 (U1-Lctx) subfamily. As to expression, expressed by the venom gland.

It localises to the secreted. In Lycosa singoriensis (Wolf spider), this protein is U1-lycotoxin-Ls1b.